A 337-amino-acid chain; its full sequence is Glyceraldehyde-3-phosphate dehydrogenase 1, cytosolic (337 aa).

NAD(+) is bound by residues 13–14, aspartate 35, and arginine 82; that span reads RI. D-glyceraldehyde 3-phosphate-binding positions include 153-155, threonine 184, 213-214, and arginine 236; these read SCT and TG. Residue cysteine 154 is the Nucleophile of the active site. Asparagine 318 is a binding site for NAD(+).

Belongs to the glyceraldehyde-3-phosphate dehydrogenase family. Homotetramer.

Its subcellular location is the cytoplasm. The enzyme catalyses D-glyceraldehyde 3-phosphate + phosphate + NAD(+) = (2R)-3-phospho-glyceroyl phosphate + NADH + H(+). It functions in the pathway carbohydrate degradation; glycolysis; pyruvate from D-glyceraldehyde 3-phosphate: step 1/5. Functionally, key enzyme in glycolysis that catalyzes the first step of the pathway by converting D-glyceraldehyde 3-phosphate (G3P) into 3-phospho-D-glyceroyl phosphate. Essential for the maintenance of cellular ATP levels and carbohydrate metabolism. This chain is Glyceraldehyde-3-phosphate dehydrogenase 1, cytosolic (GAPC), found in Hordeum vulgare (Barley).